The following is a 485-amino-acid chain: Glucagon receptor (485 aa).

The signal sequence occupies residues 1–26 (MPLTQLHCPHLLLLLLVLSCLPEAPS). At 27-137 (AQVMDFLFEK…EIEVQKGVAK (111 aa)) the chain is on the extracellular side. Cystine bridges form between cysteine 44/cysteine 68, cysteine 59/cysteine 101, and cysteine 82/cysteine 122. Residues asparagine 47, asparagine 60, asparagine 75, asparagine 79, and asparagine 118 are each glycosylated (N-linked (GlcNAc...) asparagine). A helical transmembrane segment spans residues 138–162 (MYSSQQVMYTVGYSLSLGALLLALV). Residues 163 to 174 (ILLGLRKLHCTR) lie on the Cytoplasmic side of the membrane. Residues 175 to 199 (NYIHGNLFASFVLKAGSVLVIDWLL) traverse the membrane as a helical segment. Residues 200-226 (KTRYSQKIGDDLSVSVWLSDGAMAGCR) lie on the Extracellular side of the membrane. Cysteine 225 and cysteine 295 form a disulfide bridge. A helical membrane pass occupies residues 227-250 (VATVIMQYGIIANYCWLLVEGVYL). The Cytoplasmic segment spans residues 251–264 (YSLLSLATFSERSF). A helical transmembrane segment spans residues 265 to 286 (FSLYLGIGWGAPLLFVIPWVVV). The Extracellular portion of the chain corresponds to 287–304 (KCLFENVQCWTSNDNMGF). Residues 305–327 (WWILRIPVFLALLINFFIFVHII) traverse the membrane as a helical segment. The Cytoplasmic portion of the chain corresponds to 328–351 (HLLVAKLRAHQMHYADYKFRLARS). The segment at 351 to 354 (STLT) is important for allosteric inhibitor binding. The helical transmembrane segment at 352–370 (TLTLIPLLGVHEVVFAFVT) threads the bilayer. At 371-382 (DEHAQGTLRSTK) the chain is on the extracellular side. Residues 383–403 (LFFDLFLSSFQGLLVAVLYCF) traverse the membrane as a helical segment. The Cytoplasmic portion of the chain corresponds to 404 to 485 (LNKEVQAELM…SLPRLADSPT (82 aa)). A compositionally biased stretch (polar residues) spans 457–475 (AGSSSGTGCVPSMETSLAS). Residues 457–485 (AGSSSGTGCVPSMETSLASSLPRLADSPT) are disordered. Serine 460 and serine 476 each carry phosphoserine.

Belongs to the G-protein coupled receptor 2 family. Post-translationally, ligand-binding promotes phosphorylation of serine residues in the C-terminal cytoplasmic domain. Phosphorylation is important for receptor endocytosis after ligand-binding. As to expression, expressed predominantly in liver, kidney, adrenal, lung and stomach, while lower levels of expression are detected in brown and white adipose tissue, cerebellum, duodenum and heart.

The protein localises to the cell membrane. In terms of biological role, G-protein coupled receptor for glucagon that plays a central role in the regulation of blood glucose levels and glucose homeostasis. Regulates the rate of hepatic glucose production by promoting glycogen hydrolysis and gluconeogenesis. Plays an important role in mediating the responses to fasting. Ligand binding causes a conformation change that triggers signaling via guanine nucleotide-binding proteins (G proteins) and modulates the activity of down-stream effectors, such as adenylate cyclase. Promotes activation of adenylate cyclase. Besides, plays a role in signaling via a phosphatidylinositol-calcium second messenger system. This chain is Glucagon receptor (Gcgr), found in Mus musculus (Mouse).